The chain runs to 313 residues: Small ribosomal subunit biogenesis GTPase RsgA (313 aa).

In terms of domain architecture, CP-type G spans 80-237 (KVALRQVIVS…LIDTPGIKEF (158 aa)). GTP is bound by residues 129 to 132 (NKVD) and 180 to 188 (GQSGVGKSS). Zn(2+) is bound by residues cysteine 261, cysteine 266, histidine 268, and cysteine 274.

The protein belongs to the TRAFAC class YlqF/YawG GTPase family. RsgA subfamily. As to quaternary structure, monomer. Associates with 30S ribosomal subunit, binds 16S rRNA. Zn(2+) is required as a cofactor.

It is found in the cytoplasm. Its function is as follows. One of several proteins that assist in the late maturation steps of the functional core of the 30S ribosomal subunit. Helps release RbfA from mature subunits. May play a role in the assembly of ribosomal proteins into the subunit. Circularly permuted GTPase that catalyzes slow GTP hydrolysis, GTPase activity is stimulated by the 30S ribosomal subunit. The polypeptide is Small ribosomal subunit biogenesis GTPase RsgA (Borrelia recurrentis (strain A1)).